Consider the following 252-residue polypeptide: MLAKRIIPCLDVKEGRVVKGVNFIGLQDVGDPVEIAALYNDAGADEIVFLDITATHEGRKTIIDVVEKTASKVFIPLTVGGGISSVKDMYNLLRAGADKVSINSAAVRNPKLIEEGAQHFGSQCIVVAIDARKVAEGKWNVYVNGGRVDTGMDAIGWAKRVVMLGAGEILLTSMDADGTKNGYDLRLTEEISKSVSIPVIASGGCGHADHIIEVFQKTTVDAALAASIFHYGEATIGDVKRKLRNANVEVRL.

Active-site residues include D11 and D130.

The protein belongs to the HisA/HisF family. As to quaternary structure, heterodimer of HisH and HisF.

Its subcellular location is the cytoplasm. It carries out the reaction 5-[(5-phospho-1-deoxy-D-ribulos-1-ylimino)methylamino]-1-(5-phospho-beta-D-ribosyl)imidazole-4-carboxamide + L-glutamine = D-erythro-1-(imidazol-4-yl)glycerol 3-phosphate + 5-amino-1-(5-phospho-beta-D-ribosyl)imidazole-4-carboxamide + L-glutamate + H(+). It functions in the pathway amino-acid biosynthesis; L-histidine biosynthesis; L-histidine from 5-phospho-alpha-D-ribose 1-diphosphate: step 5/9. In terms of biological role, IGPS catalyzes the conversion of PRFAR and glutamine to IGP, AICAR and glutamate. The HisF subunit catalyzes the cyclization activity that produces IGP and AICAR from PRFAR using the ammonia provided by the HisH subunit. The protein is Imidazole glycerol phosphate synthase subunit HisF of Bacillus anthracis (strain CDC 684 / NRRL 3495).